A 281-amino-acid polypeptide reads, in one-letter code: 2-dehydro-3-deoxyphosphooctonate aldolase (281 aa).

It belongs to the KdsA family.

The protein localises to the cytoplasm. It carries out the reaction D-arabinose 5-phosphate + phosphoenolpyruvate + H2O = 3-deoxy-alpha-D-manno-2-octulosonate-8-phosphate + phosphate. It functions in the pathway carbohydrate biosynthesis; 3-deoxy-D-manno-octulosonate biosynthesis; 3-deoxy-D-manno-octulosonate from D-ribulose 5-phosphate: step 2/3. It participates in bacterial outer membrane biogenesis; lipopolysaccharide biosynthesis. The sequence is that of 2-dehydro-3-deoxyphosphooctonate aldolase from Ectopseudomonas mendocina (strain ymp) (Pseudomonas mendocina).